The following is a 354-amino-acid chain: Protein Wnt-8a (354 aa).

The N-terminal stretch at 1–19 (MGHLLMLWVAAGMCYPALG) is a signal peptide. C54 and C65 form a disulfide bridge. N-linked (GlcNAc...) asparagine glycosylation occurs at N103. 10 disulfides stabilise this stretch: C104-C112, C114-C132, C180-C194, C182-C189, C259-C297, C275-C290, C294-C336, C312-C327, C314-C324, and C319-C320. A lipid anchor (O-palmitoleoyl serine) is attached at S186. N262 carries N-linked (GlcNAc...) asparagine glycosylation.

This sequence belongs to the Wnt family. In terms of assembly, forms a soluble 1:1 complex with AFM; this prevents oligomerization and is required for prolonged biological activity. The complex with AFM may represent the physiological form in body fluids. In terms of processing, palmitoleoylation is required for efficient binding to frizzled receptors. Depalmitoleoylation leads to Wnt signaling pathway inhibition. Post-translationally, proteolytic processing by TIKI1 and TIKI2 promotes oxidation and formation of large disulfide-bond oligomers, leading to inactivation of WNT8A.

It is found in the secreted. The protein resides in the extracellular space. The protein localises to the extracellular matrix. Its function is as follows. Ligand for members of the frizzled family of seven transmembrane receptors. Plays a role in embryonic patterning. In Mus musculus (Mouse), this protein is Protein Wnt-8a (Wnt8a).